We begin with the raw amino-acid sequence, 466 residues long: Neuraminidase (466 aa).

At 1–8 the chain is on the intravirion side; that stretch reads MLPSTVQT. A helical transmembrane segment spans residues 9–31; it reads LTLLLTSGGVLLSLYVSASLSYL. The tract at residues 13–35 is involved in apical transport and lipid raft association; it reads LTSGGVLLSLYVSASLSYLLYSD. The Virion surface portion of the chain corresponds to 32–466; the sequence is LYSDVLLKFS…DTVTGVDMAL (435 aa). The segment at 38-86 is hypervariable stalk region; that stretch reads LKFSSTKTTAPTMSLECTNASNAQTVNHSATKEMTFPPPEPEWTYPRLS. N-linked (GlcNAc...) asparagine; by host glycans are attached at residues Asn-56 and Asn-64. Cystine bridges form between Cys-87–Cys-420, Cys-122–Cys-127, Cys-182–Cys-229, Cys-231–Cys-236, Cys-277–Cys-291, Cys-279–Cys-289, Cys-318–Cys-337, and Cys-424–Cys-447. The interval 89 to 466 is head of neuraminidase; that stretch reads GSTFQKALLI…DTVTGVDMAL (378 aa). Arg-116 contacts substrate. Asn-144 carries an N-linked (GlcNAc...) asparagine; by host glycan. Asp-149 serves as the catalytic Proton donor/acceptor. Residue Arg-150 coordinates substrate. 275 to 276 lines the substrate pocket; sequence EE. Asn-284 carries N-linked (GlcNAc...) asparagine; by host glycosylation. A substrate-binding site is contributed by Arg-292. Positions 293, 297, 324, and 346 each coordinate Ca(2+). Arg-374 contacts substrate. The active-site Nucleophile is Tyr-409.

It belongs to the glycosyl hydrolase 34 family. In terms of assembly, homotetramer. Ca(2+) is required as a cofactor. In terms of processing, N-glycosylated.

It is found in the virion membrane. The protein localises to the host apical cell membrane. It carries out the reaction Hydrolysis of alpha-(2-&gt;3)-, alpha-(2-&gt;6)-, alpha-(2-&gt;8)- glycosidic linkages of terminal sialic acid residues in oligosaccharides, glycoproteins, glycolipids, colominic acid and synthetic substrates.. With respect to regulation, inhibited by the neuraminidase inhibitors zanamivir (Relenza) and oseltamivir (Tamiflu). These drugs interfere with the release of progeny virus from infected cells and are effective against all influenza strains. Resistance to neuraminidase inhibitors is quite rare. Catalyzes the removal of terminal sialic acid residues from viral and cellular glycoconjugates. Cleaves off the terminal sialic acids on the glycosylated HA during virus budding to facilitate virus release. Additionally helps virus spread through the circulation by further removing sialic acids from the cell surface. These cleavages prevent self-aggregation and ensure the efficient spread of the progeny virus from cell to cell. Otherwise, infection would be limited to one round of replication. Described as a receptor-destroying enzyme because it cleaves a terminal sialic acid from the cellular receptors. May facilitate viral invasion of the upper airways by cleaving the sialic acid moieties on the mucin of the airway epithelial cells. Likely to plays a role in the budding process through its association with lipid rafts during intracellular transport. May additionally display a raft-association independent effect on budding. Plays a role in the determination of host range restriction on replication and virulence. Sialidase activity in late endosome/lysosome traffic seems to enhance virus replication. The protein is Neuraminidase of Influenza B virus (strain B/Lee/1940).